The following is a 172-amino-acid chain: Lipoprotein signal peptidase (172 aa).

3 helical membrane passes run 10-30 (LIWLLLSVLVVGLDQWSKAWV), 68-88 (WQLWFFTALAVGISGLLAFWL), and 98-118 (SALPYALVIGGAIGNVIDRLM). Active-site residues include aspartate 124 and aspartate 142. A helical membrane pass occupies residues 138–158 (FNIADSAIVGGAIGIAVFGLF).

Belongs to the peptidase A8 family.

It is found in the cell inner membrane. It carries out the reaction Release of signal peptides from bacterial membrane prolipoproteins. Hydrolyzes -Xaa-Yaa-Zaa-|-(S,diacylglyceryl)Cys-, in which Xaa is hydrophobic (preferably Leu), and Yaa (Ala or Ser) and Zaa (Gly or Ala) have small, neutral side chains.. It participates in protein modification; lipoprotein biosynthesis (signal peptide cleavage). This protein specifically catalyzes the removal of signal peptides from prolipoproteins. The polypeptide is Lipoprotein signal peptidase (Xanthomonas euvesicatoria pv. vesicatoria (strain 85-10) (Xanthomonas campestris pv. vesicatoria)).